A 163-amino-acid polypeptide reads, in one-letter code: MNTKYNKEFLLYLAGFVDGDGSIIAQIKPNQSYKFKHQLSLTFQVTQKTQRRWFLDKLVDEIGVGYVRDRGSVSDYILSEIKPLHNFLTQLQPFLKLKQKQANLVLKIIEQLPSAKESPDKFLEVCTWVDQIAALNDSKTRKTTSETVRAVLDSLSEKKKSSP.

Residues Gly-19 and Asp-20 each contribute to the Mg(2+) site. Interaction with DNA stretches follow at residues 26–38, 44–47, 68–70, and 138–143; these read QIKP…FKHQ, QVTQ, RDR, and SKTRKT.

This sequence belongs to the LAGLIDADG endonuclease family. Homodimer. Mg(2+) serves as cofactor. Requires Mn(2+) as cofactor. It depends on Co(2+) as a cofactor. Ni(2+) is required as a cofactor. The cofactor is Zn(2+).

Its subcellular location is the plastid. It is found in the chloroplast. Endonuclease involved in group I intron homing. Recognizes and cleaves a 19-24 bp palindromic DNA site. The chain is DNA endonuclease I-CreI from Chlamydomonas reinhardtii (Chlamydomonas smithii).